A 490-amino-acid chain; its full sequence is Aspartyl/glutamyl-tRNA(Asn/Gln) amidotransferase subunit B (490 aa).

This sequence belongs to the GatB/GatE family. GatB subfamily. In terms of assembly, heterotrimer of A, B and C subunits.

The enzyme catalyses L-glutamyl-tRNA(Gln) + L-glutamine + ATP + H2O = L-glutaminyl-tRNA(Gln) + L-glutamate + ADP + phosphate + H(+). It catalyses the reaction L-aspartyl-tRNA(Asn) + L-glutamine + ATP + H2O = L-asparaginyl-tRNA(Asn) + L-glutamate + ADP + phosphate + 2 H(+). Its function is as follows. Allows the formation of correctly charged Asn-tRNA(Asn) or Gln-tRNA(Gln) through the transamidation of misacylated Asp-tRNA(Asn) or Glu-tRNA(Gln) in organisms which lack either or both of asparaginyl-tRNA or glutaminyl-tRNA synthetases. The reaction takes place in the presence of glutamine and ATP through an activated phospho-Asp-tRNA(Asn) or phospho-Glu-tRNA(Gln). This Synechococcus sp. (strain JA-3-3Ab) (Cyanobacteria bacterium Yellowstone A-Prime) protein is Aspartyl/glutamyl-tRNA(Asn/Gln) amidotransferase subunit B.